Consider the following 84-residue polypeptide: ATP synthase subunit c (84 aa).

The next 2 membrane-spanning stretches (helical) occupy residues 9 to 29 (IFGSVILLAVAALATAIGFSL) and 54 to 74 (IVAGLLDAISMIAVGIALLFI).

This sequence belongs to the ATPase C chain family. F-type ATPases have 2 components, F(1) - the catalytic core - and F(0) - the membrane proton channel. F(1) has five subunits: alpha(3), beta(3), gamma(1), delta(1), epsilon(1). F(0) has three main subunits: a(1), b(2) and c(10-14). The alpha and beta chains form an alternating ring which encloses part of the gamma chain. F(1) is attached to F(0) by a central stalk formed by the gamma and epsilon chains, while a peripheral stalk is formed by the delta and b chains.

It localises to the cell inner membrane. In terms of biological role, f(1)F(0) ATP synthase produces ATP from ADP in the presence of a proton or sodium gradient. F-type ATPases consist of two structural domains, F(1) containing the extramembraneous catalytic core and F(0) containing the membrane proton channel, linked together by a central stalk and a peripheral stalk. During catalysis, ATP synthesis in the catalytic domain of F(1) is coupled via a rotary mechanism of the central stalk subunits to proton translocation. Functionally, key component of the F(0) channel; it plays a direct role in translocation across the membrane. A homomeric c-ring of between 10-14 subunits forms the central stalk rotor element with the F(1) delta and epsilon subunits. The sequence is that of ATP synthase subunit c from Histophilus somni (strain 129Pt) (Haemophilus somnus).